The following is a 675-amino-acid chain: Putative elongation factor TypA-like SVR3, chloroplastic (675 aa).

The N-terminal 58 residues, 1-58 (MELSLSTSSASPAVLRRQASPLLHKQQVLGVSFASALKPGGGALRFPSRRPLPRPITC), are a transit peptide targeting the chloroplast. The segment at 43-76 (ALRFPSRRPLPRPITCSASPSTAEPASEVKKKQL) is disordered. Positions 59-68 (SASPSTAEPA) are enriched in low complexity. The 196-residue stretch at 80–275 (DNVRNIAIVA…AIIRCVPGPN (196 aa)) folds into the tr-type G domain.

Belongs to the TRAFAC class translation factor GTPase superfamily. Classic translation factor GTPase family. BipA subfamily.

It localises to the plastid. The protein localises to the chloroplast. Putative chloroplastic elongation factor involved in response to chilling stress. Required for proper chloroplast rRNA processing and/or translation at low temperature. Involved in plastid protein homeostasis. The chain is Putative elongation factor TypA-like SVR3, chloroplastic (SVR3) from Arabidopsis thaliana (Mouse-ear cress).